Consider the following 145-residue polypeptide: Probable WRKY transcription factor 75 (145 aa).

The span at 20 to 38 (SKPELHQGEEESSKVRSEG) shows a compositional bias: basic and acidic residues. Residues 20-55 (SKPELHQGEEESSKVRSEGCSKSVESSKKKGKKQRY) are disordered. Positions 61–126 (SQVDILDDGY…YEGVHSHPIE (66 aa)) form a DNA-binding region, WRKY.

The protein belongs to the WRKY group II-c family.

The protein resides in the nucleus. Functionally, transcription factor. Interacts specifically with the W box (5'-(T)TGAC[CT]-3'), a frequently occurring elicitor-responsive cis-acting element. This is Probable WRKY transcription factor 75 (WRKY75) from Arabidopsis thaliana (Mouse-ear cress).